The chain runs to 481 residues: 4-hydroxyphenylacetate 3-monooxygenase oxygenase component (481 aa).

Substrate contacts are provided by residues 100 to 104 (RSPDY) and H142. Residues 142–144 (HAL), 148–151 (QVNR), and T185 each bind FAD. Substrate is bound at residue 197–198 (ST). 444-447 (DPVR) serves as a coordination point for FAD.

This sequence belongs to the FADH(2)-utilizing monooxygenase family. As to quaternary structure, homotetramer consisting of a dimer of dimers. 4-HPA 3-monooxygenase consists of a reductase component HpaC and an oxygenase component HpaB.

The enzyme catalyses 4-hydroxyphenylacetate + FADH2 + O2 = 3,4-dihydroxyphenylacetate + FAD + H2O + H(+). It participates in aromatic compound metabolism; 4-hydroxyphenylacetate degradation; pyruvate and succinate semialdehyde from 4-hydroxyphenylacetate: step 1/7. In terms of biological role, utilizes FADH(2) supplied by HpaC, to catalyze the hydroxylation of 4-hydroxyphenylacetic acid, leading to the production of 3,4-dihydroxyphenylacetic acid (DHPA). The protein is 4-hydroxyphenylacetate 3-monooxygenase oxygenase component of Thermus thermophilus (strain ATCC 27634 / DSM 579 / HB8).